The following is a 90-amino-acid chain: Cell division topological specificity factor (90 aa).

This sequence belongs to the MinE family.

In terms of biological role, prevents the cell division inhibition by proteins MinC and MinD at internal division sites while permitting inhibition at polar sites. This ensures cell division at the proper site by restricting the formation of a division septum at the midpoint of the long axis of the cell. The chain is Cell division topological specificity factor from Bordetella avium (strain 197N).